A 376-amino-acid polypeptide reads, in one-letter code: Queuine tRNA-ribosyltransferase (376 aa).

D93 serves as the catalytic Proton acceptor. Residues 93–97 (DSGGF), D147, Q190, and G217 contribute to the substrate site. The interval 248-254 (GVGKPDD) is RNA binding. Catalysis depends on D267, which acts as the Nucleophile. The Zn(2+) site is built by C305, C307, C310, and H336.

The protein belongs to the queuine tRNA-ribosyltransferase family. In terms of assembly, homodimer. Within each dimer, one monomer is responsible for RNA recognition and catalysis, while the other monomer binds to the replacement base PreQ1. The cofactor is Zn(2+).

It catalyses the reaction 7-aminomethyl-7-carbaguanine + guanosine(34) in tRNA = 7-aminomethyl-7-carbaguanosine(34) in tRNA + guanine. The protein operates within tRNA modification; tRNA-queuosine biosynthesis. In terms of biological role, catalyzes the base-exchange of a guanine (G) residue with the queuine precursor 7-aminomethyl-7-deazaguanine (PreQ1) at position 34 (anticodon wobble position) in tRNAs with GU(N) anticodons (tRNA-Asp, -Asn, -His and -Tyr). Catalysis occurs through a double-displacement mechanism. The nucleophile active site attacks the C1' of nucleotide 34 to detach the guanine base from the RNA, forming a covalent enzyme-RNA intermediate. The proton acceptor active site deprotonates the incoming PreQ1, allowing a nucleophilic attack on the C1' of the ribose to form the product. After dissociation, two additional enzymatic reactions on the tRNA convert PreQ1 to queuine (Q), resulting in the hypermodified nucleoside queuosine (7-(((4,5-cis-dihydroxy-2-cyclopenten-1-yl)amino)methyl)-7-deazaguanosine). The protein is Queuine tRNA-ribosyltransferase of Jannaschia sp. (strain CCS1).